A 942-amino-acid polypeptide reads, in one-letter code: DDB1- and CUL4-associated factor 5 (942 aa).

WD repeat units follow at residues 51–91 (GHFG…HSRV), 99–139 (EHHS…LDVF), 140–180 (AHED…HGEP), 185–225 (NYPS…SSLL), 277–317 (FNSC…EAGG), and 331–370 (GHRS…GCTG). Disordered stretches follow at residues 449–478 (GVSE…ESAD) and 490–509 (TTNT…AASR). Residues 454–465 (SGYTDSESSASL) are compositionally biased toward polar residues. Position 500 is a phosphothreonine (T500). Residues S531, S533, S626, S628, S645, S648, and S651 each carry the phosphoserine modification. Disordered regions lie at residues 544-655 (TDLF…DIES), 676-824 (NNKD…EERS), and 889-942 (ACET…KLKT). The span at 625–641 (LSSSPTSSPERSTSTLE) shows a compositional bias: low complexity. Composition is skewed to basic and acidic residues over residues 690-701 (DEGRAGTSHKDN) and 728-738 (CSKDTFKEETP). Positions 760 to 770 (GTSQDTGNSGS) are enriched in polar residues. Position 794 is a phosphoserine (S794). Residues 801–815 (SGSTLNSGSGNCPRT) show a composition bias toward polar residues.

Interacts with DDB1, CUL4A or CUL4B. Interacts with L3MBTL3. Interacts with DNMT1. Interacts with E2F1. Interacts with SOX2. As to expression, ubiquitous.

Its pathway is protein modification; protein ubiquitination. In terms of biological role, is a substrate receptor for the CUL4-DDB1 E3 ubiquitin-protein ligase complex (CRL4). The complex CRL4-DCAF5 is involved in the ubiquitination of a set of methylated non-histone proteins, including SOX2, DNMT1 and E2F1. In Homo sapiens (Human), this protein is DDB1- and CUL4-associated factor 5 (DCAF5).